A 432-amino-acid chain; its full sequence is 3-phosphoshikimate 1-carboxyvinyltransferase (432 aa).

The 3-phosphoshikimate site is built by lysine 22, serine 23, and arginine 27. Lysine 22 is a binding site for phosphoenolpyruvate. The phosphoenolpyruvate site is built by glycine 96 and arginine 127. Residues serine 173, serine 174, glutamine 175, serine 201, aspartate 317, asparagine 340, and lysine 344 each coordinate 3-phosphoshikimate. Glutamine 175 contributes to the phosphoenolpyruvate binding site. The active-site Proton acceptor is the aspartate 317. Residues arginine 348, arginine 392, and lysine 417 each contribute to the phosphoenolpyruvate site.

Belongs to the EPSP synthase family. As to quaternary structure, monomer.

The protein localises to the cytoplasm. It catalyses the reaction 3-phosphoshikimate + phosphoenolpyruvate = 5-O-(1-carboxyvinyl)-3-phosphoshikimate + phosphate. The protein operates within metabolic intermediate biosynthesis; chorismate biosynthesis; chorismate from D-erythrose 4-phosphate and phosphoenolpyruvate: step 6/7. Catalyzes the transfer of the enolpyruvyl moiety of phosphoenolpyruvate (PEP) to the 5-hydroxyl of shikimate-3-phosphate (S3P) to produce enolpyruvyl shikimate-3-phosphate and inorganic phosphate. This is 3-phosphoshikimate 1-carboxyvinyltransferase from Mannheimia haemolytica (Pasteurella haemolytica).